The sequence spans 644 residues: Chaperone protein HscA (644 aa).

It belongs to the heat shock protein 70 family.

In terms of biological role, chaperone involved in the maturation of iron-sulfur cluster-containing proteins. Has a low intrinsic ATPase activity which is markedly stimulated by HscB. Involved in the maturation of IscU. The chain is Chaperone protein HscA from Yersinia pseudotuberculosis serotype I (strain IP32953).